The following is a 369-amino-acid chain: DNA replication and repair protein RecF (369 aa).

30-37 (GDNAQGKT) contacts ATP.

Belongs to the RecF family.

It is found in the cytoplasm. The RecF protein is involved in DNA metabolism; it is required for DNA replication and normal SOS inducibility. RecF binds preferentially to single-stranded, linear DNA. It also seems to bind ATP. This chain is DNA replication and repair protein RecF, found in Streptococcus equi subsp. zooepidemicus (strain MGCS10565).